Here is a 104-residue protein sequence, read N- to C-terminus: L-rhamnose mutarotase (104 aa).

A substrate-binding site is contributed by tyrosine 18. Histidine 22 acts as the Proton donor in catalysis. Substrate contacts are provided by residues tyrosine 41 and 76–77; that span reads WW.

This sequence belongs to the rhamnose mutarotase family. In terms of assembly, homodimer.

Its subcellular location is the cytoplasm. The catalysed reaction is alpha-L-rhamnose = beta-L-rhamnose. It functions in the pathway carbohydrate metabolism; L-rhamnose metabolism. Functionally, involved in the anomeric conversion of L-rhamnose. The sequence is that of L-rhamnose mutarotase from Shigella sonnei (strain Ss046).